Reading from the N-terminus, the 119-residue chain is Ribosome-binding factor A (119 aa).

It belongs to the RbfA family. As to quaternary structure, monomer. Binds 30S ribosomal subunits, but not 50S ribosomal subunits or 70S ribosomes.

The protein resides in the cytoplasm. One of several proteins that assist in the late maturation steps of the functional core of the 30S ribosomal subunit. Associates with free 30S ribosomal subunits (but not with 30S subunits that are part of 70S ribosomes or polysomes). Required for efficient processing of 16S rRNA. May interact with the 5'-terminal helix region of 16S rRNA. This Geobacter sp. (strain M21) protein is Ribosome-binding factor A.